Here is an 833-residue protein sequence, read N- to C-terminus: Homeobox-leucine zipper protein ATHB-8 (833 aa).

A DNA-binding region (homeobox) is located at residues 12-75 (DNGKYVRYTP…NRRCREKQRK (64 aa)). Positions 70–108 (REKQRKEASRLQAVNRKLTAMNKLLMEENDRLQKQVSHL) form a coiled coil. Residues 150-378 (RDASPAGLLS…ISQEISQPNV (229 aa)) enclose the START domain.

This sequence belongs to the HD-ZIP homeobox family. Class III subfamily. In terms of assembly, interacts with ESR1 and ESR2. Interacts with ZPR3.

The protein resides in the nucleus. In terms of biological role, probable transcription factor involved in the regulation of vascular development. May promote differentiation of precambial and cambial cells. This Arabidopsis thaliana (Mouse-ear cress) protein is Homeobox-leucine zipper protein ATHB-8 (ATHB-8).